Reading from the N-terminus, the 341-residue chain is Putative NADPH-dependent methylglyoxal reductase GRP2 (341 aa).

NADP(+) contacts are provided by lysine 40 and tyrosine 171.

The protein belongs to the NAD(P)-dependent epimerase/dehydratase family. Dihydroflavonol-4-reductase subfamily.

It is found in the cytoplasm. The catalysed reaction is (S)-lactaldehyde + NADP(+) = methylglyoxal + NADPH + H(+). Catalyzes the irreversible reduction of the cytotoxic compound methylglyoxal (MG, 2-oxopropanal) to (S)-lactaldehyde. MG is synthesized via a bypath of glycolysis from dihydroxyacetone phosphate and is believed to play a role in cell cycle regulation and stress adaptation. This Candida albicans (strain SC5314 / ATCC MYA-2876) (Yeast) protein is Putative NADPH-dependent methylglyoxal reductase GRP2 (GRP2).